Reading from the N-terminus, the 830-residue chain is MDISVFEWKKVDLFNIIVVPFVKIPNTAEISCYCFPESKSSTEERNIKLVICDKNRNILIYLSNWECITFKSPSTRKAIALCSLTSNNSLATVTPDINNGIHIDIFDLNRLTKKQAAPIIASAYTQPSSTPLCLNADVIDDKLFALAIGLGNGDILLHYGKITKNFSANIRQHTVSGNAVNGIHFDFKTQPLDTTQIMFVTCVQGVYCFMLKEKCIMDTKFVLDNDKGNLNYRSIMCKAGGGEINDSMLVVGRADAVYCYTPEGRGPCFAIEGAKECLAWVGHYLIVGVKNSNLKQNATTLIVLDTENKIIVFQRQFQELFYVISENNFCYIVTNSGDTDACNMLMLEKNSIDVNIRLLVEKHMYNIALRLLHREGYTSSPETALVRFQYGNHLLQKGDFSRATQEFIKTIGFIKPYAVISKLLYSRYNTYLLNYLTEWKKKNESSSCHTRLIECCIKRDQIEHEMQQDDFKHYKSPAKIKHLATLSKMYFACTPSNQVPVEEEHLLHQLLEYGPASLAVDLTTYLNNITFENVKESKNILSFCSILADHNDYCAKMLAKIIEAFPVCDEKLLFYLLVFYFKLWRLDKVTSSFVSDFIKTHSLRMDKTIIVSRLYTFFNVTQRIHGHQKNTGTLHNETIDKCIENLIKNNPDVALNENLSKRSFLMMLKSSCSTEEIKAIKIKPIFKDRLLRSIVDSANELKLVENFNEKIKRSRSMLSLYTNNPIEFRNDKCDICREMLSMQSIYFLCQHSFHEECLNYKSTKRQEKFLCIICKTRNLLSPKHSSNFSCDSSDTIAVLAKIVSIGNKLETKLMIRGRQKSDGVTCNPFN.

The RING-type; atypical zinc finger occupies 733–775; that stretch reads CDICREMLSMQSIYFLCQHSFHEECLNYKSTKRQEKFLCIICK.

This sequence belongs to the VPS11 family. In terms of assembly, part of the homotypic fusion and vacuole protein sorting (HOPS) complex, composed of Vps16A, car/Vps33A, dor/Vps18, Vps39, Vps11 and lt/Vps41. Unlike in other species, not part of the class C core vacuole/endosome tethering (CORVET) complex.

The protein localises to the late endosome membrane. Its subcellular location is the lysosome membrane. Its function is as follows. Part of the homotypic fusion and vacuole protein sorting (HOPS) tethering complex involved in endo-lysosomal vesicle trafficking and lysosome biogenesis, but unlike in many other species does not form part of the class C core vacuole/endosome tethering (CORVET) complex. The HOPS complex facilitates docking and fusion of lysosomes with late endosomes and several other types of vesicles. The HOPS complex is also involved in autophagy, pigment granule biogenesis and crinophagy (the elimination of unused secretory granules through fusion with lysosomes). The HOPS complex probably instigates autophagosome-lysosome fusion by binding autophagosome-associated Syx17/syntaxin 17 and promoting assembly of the trans-SNARE complex. Independent of Syx17/syntaxin 17, HOPS is involved in biosynthetic transport to lysosomes and lysosome-related organelles such as eye-pigment granules. Required for autophagocytosis-dependent remodeling of myofibrils and transverse-tubules (T-tubules) during metamorphosis. The protein is Vacuolar protein sorting-associated protein 11 homolog of Drosophila melanogaster (Fruit fly).